The chain runs to 867 residues: uncharacterized protein (867 aa).

The region spanning 1–294 is the SPX domain; it reads MKFSHSLQFN…GSSLRESYMK (294 aa). 2 disordered regions span residues 105–152 and 165–228; these read QGNN…GQTS and ESTA…NNNR. Positions 138–152 are enriched in polar residues; it reads ITSSNREIYLNGQTS. Positions 198–223 are enriched in acidic residues; it reads GNDDEVEEEDDDDDDEDEDEDEDEDN. A run of 12 helical transmembrane segments spans residues 406-426, 434-454, 485-505, 537-557, 576-596, 616-636, 656-676, 683-703, 712-732, 755-775, 797-817, and 842-862; these read TIAT…FPVI, CLAL…PLFV, VIFS…FTIA, MFVA…VLCF, ILIV…PISS, FAVS…LLSF, FTGV…LWCL, VFGD…GTGL, FLWT…VVSS, VLLI…HIVA, LFVL…TSGF, and AGIP…TPIM.

The protein belongs to the CitM (TC 2.A.11) transporter family.

The protein localises to the endoplasmic reticulum membrane. This is an uncharacterized protein from Schizosaccharomyces pombe (strain 972 / ATCC 24843) (Fission yeast).